We begin with the raw amino-acid sequence, 232 residues long: Recombination protein RecR (232 aa).

A C4-type zinc finger spans residues 92–107 (CQVCFHLSAEPVCDIC). In terms of domain architecture, Toprim spans 115 to 209 (SVICVVSDPR…KVTRIAFGLP (95 aa)).

The protein belongs to the RecR family.

Functionally, may play a role in DNA repair. It seems to be involved in an RecBC-independent recombinational process of DNA repair. It may act with RecF and RecO. The chain is Recombination protein RecR from Synechocystis sp. (strain ATCC 27184 / PCC 6803 / Kazusa).